A 549-amino-acid chain; its full sequence is MKNINPSQTAAWQALQHHFDAMKEVQISELFAQDSDRFAHFSATFDDLMLVDYSKNRITTETMEKLHALARETDLSAAIQSMFAGEKINRTEDRAVLHVALRNRSNTPILVDGKDVMPEVNAVLAKMKDFSERVIGGEWKGYTGKTITDVVNIGIGGSDLGPFMVTEALKPYKNHLNMHFVSNVDGTHIAETLKPLNPETTLFLVASKTFTTQETMTNAHSARDWFLNTAKDEKHVAKHFAALSTNAKAVGEFGIDTNNMFEFWDWVGGRYSLWSAIGLSIILSLGFENFEKLLSGAHAMDKHFASTPAEKNLPVLLALIGIWYNNFFGAETEAILPYDQYMHRFAAYFQQGNMESNGKSADRNGNPVDYQTGPIIWGEPGTNGQHAFYQLIHQGTKLIPCDFIAPAVSHNPLSDHHSKLLSNFFAQTEALAFGKSRDVVEAEFAAAGKSAKDVEHVAPFKVFEGNRPTNSILLREITPYSLGALIALYEHKIFTQGAILNIFTFDQWGVELGKQLANRILPELENDSTIDSHDSSTNGLINRFKAWRN.

Residue Glu-355 is the Proton donor of the active site. Residues His-386 and Lys-514 contribute to the active site.

This sequence belongs to the GPI family.

Its subcellular location is the cytoplasm. The catalysed reaction is alpha-D-glucose 6-phosphate = beta-D-fructose 6-phosphate. Its pathway is carbohydrate biosynthesis; gluconeogenesis. It functions in the pathway carbohydrate degradation; glycolysis; D-glyceraldehyde 3-phosphate and glycerone phosphate from D-glucose: step 2/4. Its function is as follows. Catalyzes the reversible isomerization of glucose-6-phosphate to fructose-6-phosphate. The polypeptide is Glucose-6-phosphate isomerase (Pectobacterium carotovorum subsp. carotovorum (strain PC1)).